The following is a 694-amino-acid chain: Elongation factor G 2 (694 aa).

Residues 8 to 282 (TAIRNIGIMA…AVVSYLPSPL (275 aa)) enclose the tr-type G domain. Residues 17–24 (AHIDAGKT), 81–85 (DTPGH), and 135–138 (NKMD) contribute to the GTP site.

This sequence belongs to the TRAFAC class translation factor GTPase superfamily. Classic translation factor GTPase family. EF-G/EF-2 subfamily.

Its subcellular location is the cytoplasm. Catalyzes the GTP-dependent ribosomal translocation step during translation elongation. During this step, the ribosome changes from the pre-translocational (PRE) to the post-translocational (POST) state as the newly formed A-site-bound peptidyl-tRNA and P-site-bound deacylated tRNA move to the P and E sites, respectively. Catalyzes the coordinated movement of the two tRNA molecules, the mRNA and conformational changes in the ribosome. The polypeptide is Elongation factor G 2 (Syntrophomonas wolfei subsp. wolfei (strain DSM 2245B / Goettingen)).